We begin with the raw amino-acid sequence, 348 residues long: Anthranilate phosphoribosyltransferase (348 aa).

5-phospho-alpha-D-ribose 1-diphosphate contacts are provided by residues Gly-81, Gly-84–Asp-85, Asn-91–Thr-94, Lys-109–Gly-117, and Ser-121. Gly-81 serves as a coordination point for anthranilate. Residue Ser-93 participates in Mg(2+) binding. Asn-112 contributes to the anthranilate binding site. Arg-167 contacts anthranilate. Asp-226 and Glu-227 together coordinate Mg(2+).

The protein belongs to the anthranilate phosphoribosyltransferase family. In terms of assembly, homodimer. Mg(2+) is required as a cofactor.

It carries out the reaction N-(5-phospho-beta-D-ribosyl)anthranilate + diphosphate = 5-phospho-alpha-D-ribose 1-diphosphate + anthranilate. It participates in amino-acid biosynthesis; L-tryptophan biosynthesis; L-tryptophan from chorismate: step 2/5. Functionally, catalyzes the transfer of the phosphoribosyl group of 5-phosphorylribose-1-pyrophosphate (PRPP) to anthranilate to yield N-(5'-phosphoribosyl)-anthranilate (PRA). The polypeptide is Anthranilate phosphoribosyltransferase (Stutzerimonas stutzeri (strain A1501) (Pseudomonas stutzeri)).